Reading from the N-terminus, the 702-residue chain is Ribosomal RNA large subunit methyltransferase K/L (702 aa).

Positions 43–154 (LIYQSLMWSR…KETASIALDL (112 aa)) constitute a THUMP domain.

The protein belongs to the methyltransferase superfamily. RlmKL family.

It is found in the cytoplasm. The enzyme catalyses guanosine(2445) in 23S rRNA + S-adenosyl-L-methionine = N(2)-methylguanosine(2445) in 23S rRNA + S-adenosyl-L-homocysteine + H(+). It carries out the reaction guanosine(2069) in 23S rRNA + S-adenosyl-L-methionine = N(2)-methylguanosine(2069) in 23S rRNA + S-adenosyl-L-homocysteine + H(+). Its function is as follows. Specifically methylates the guanine in position 2445 (m2G2445) and the guanine in position 2069 (m7G2069) of 23S rRNA. The sequence is that of Ribosomal RNA large subunit methyltransferase K/L from Salmonella choleraesuis (strain SC-B67).